A 239-amino-acid chain; its full sequence is MLLLPLLPVLLCVVSVSSSGSQTCEDTLKTCSVIACGRDGRDGPKGEKGEPGQGLRGLQGPPGKLGPPGSVGSPGSPGPKGQKGDHGDNRAIEEKLANMEAEIRILKSKLQLTNKLHAFSMGKKSGKKLFVTNHEKMPFSKVKSLCTELQGTVAIPRNAEENKAIQEVATGIAFLGITDEATEGQFMYVTGGRLTYSNWKKDEPNNHGSGEDCVIILDNGLWNDISCQASFKAVCEFPA.

The signal sequence occupies residues 1-18 (MLLLPLLPVLLCVVSVSS). Positions 35 to 88 (ACGRDGRDGPKGEKGEPGQGLRGLQGPPGKLGPPGSVGSPGSPGPKGQKGDHGD) are disordered. The region spanning 37 to 89 (GRDGRDGPKGEKGEPGQGLRGLQGPPGKLGPPGSVGSPGSPGPKGQKGDHGDN) is the Collagen-like domain. Residues 38–50 (RDGRDGPKGEKGE) show a composition bias toward basic and acidic residues. Pro44 is subject to 4-hydroxyproline. Residues Lys45 and Lys48 each carry the 5-hydroxylysine modification. 2 O-linked (Gal...) hydroxylysine glycosylation sites follow: Lys45 and Lys48. 4-hydroxyproline occurs at positions 51, 62, 68, 74, and 79. Low complexity predominate over residues 58–74 (LQGPPGKLGPPGSVGSP). Lys80 and Lys83 each carry 5-hydroxylysine. O-linked (Gal...) hydroxylysine glycosylation is found at Lys80 and Lys83. The 96-residue stretch at 144-239 (SLCTELQGTV…SFKAVCEFPA (96 aa)) folds into the C-type lectin domain. Disulfide bonds link Cys146/Cys235 and Cys213/Cys227. Residues Asp179, Glu183, Glu203, Asn205, Glu211, Asp212, Asn223, and Asp224 each contribute to the Ca(2+) site. Positions 203-211 (EPNNHGSGE) are calcium-dependent carbohydrate binding.

Homotrimer. Forms higher oligomeric complexes formed by the association of two, three or more homotrimers. Oligomerization occurs in the endoplasmic reticulum. Interacts with MASP1 and MASP2. Hydroxylated on lysine and proline residues within the collagen-like domain. Post-translationally, O-glycosylated. O-linked glycans on hydroxylysine residues consist of Glc-Gal disaccharides bound to the oxygen atom of post-translationally added hydroxyl groups. In terms of tissue distribution, detected in liver and blood serum (at protein level). Detected in liver.

The protein resides in the secreted. Functionally, calcium-dependent lectin. Plays a role in the innate immune response by binding mannose, fucose and N-acetylglucosamine moieties on different microorganisms and mediating activation of the lectin complement pathway. Binds to late apoptotic cells, as well as to apoptotic blebs and to necrotic cells, but not to early apoptotic cells, facilitating their uptake by macrophages. This is Mannose-binding protein A (Mbl1) from Mus musculus (Mouse).